The sequence spans 178 residues: ATP-dependent protease subunit HslV (178 aa).

Thr7 is an active-site residue. 3 residues coordinate Na(+): Gly162, Cys165, and Thr168.

It belongs to the peptidase T1B family. HslV subfamily. A double ring-shaped homohexamer of HslV is capped on each side by a ring-shaped HslU homohexamer. The assembly of the HslU/HslV complex is dependent on binding of ATP.

It localises to the cytoplasm. The enzyme catalyses ATP-dependent cleavage of peptide bonds with broad specificity.. Its activity is regulated as follows. Allosterically activated by HslU binding. Protease subunit of a proteasome-like degradation complex believed to be a general protein degrading machinery. The sequence is that of ATP-dependent protease subunit HslV from Cupriavidus necator (strain ATCC 17699 / DSM 428 / KCTC 22496 / NCIMB 10442 / H16 / Stanier 337) (Ralstonia eutropha).